A 393-amino-acid polypeptide reads, in one-letter code: MSAKSNQRGAKAPLLGSKIKLNIEKLAIGGAGVARHEGMVVFVPQAAPNEEILAEITLVKKNFMEARVVEILTASPHRREPPCPVAHTCGGCNWQHITEEEQRRQKHTLVLETIKKFNRDLEFNYLPIQPSPRVLRYRNRIQPKFKNGRFGFFARNSHQIVETMDCLITEETLTDKFAEVKAWAEKKNAKDLQRLEMYIAEEGDVRYGLITDEDDGIGFSQVNRFQNEDLLRTALDWAGDGPYKKVYDLYAGAGNFTFPLAAKYAGSEIIGVELNPKLVERARSKITDKRMTYFMSDVETYMRRASIGKDDLVVLDPPRAGASEYTMQTLAAAQPRKIIYISCHPVSLARDLNWFFAQTQKLGIKYKLDRVQTFEMFPQTDHVETIAELRVDS.

Residues 12–70 (APLLGSKIKLNIEKLAIGGAGVARHEGMVVFVPQAAPNEEILAEITLVKKNFMEARVVE) form the TRAM domain. [4Fe-4S] cluster contacts are provided by cysteine 83, cysteine 89, cysteine 92, and cysteine 166. Residues glutamine 221, tyrosine 250, glutamate 273, and aspartate 316 each contribute to the S-adenosyl-L-methionine site. The Nucleophile role is filled by cysteine 343.

Belongs to the class I-like SAM-binding methyltransferase superfamily. RNA M5U methyltransferase family.

This is an uncharacterized protein from Bdellovibrio bacteriovorus (strain ATCC 15356 / DSM 50701 / NCIMB 9529 / HD100).